The primary structure comprises 475 residues: Chemotaxis protein MotD (475 aa).

3 disordered regions span residues 1–175, 195–243, and 408–475; these read MRPL…PVGG, LQPE…SEPD, and GDSA…HVYM. Residues 9-22 show a composition bias toward polar residues; the sequence is RTSAASRPAQSLSV. Over residues 79-100 the composition is skewed to low complexity; that stretch reads ADVPASMADAASPDARPASERA. The segment covering 143–155 has biased composition (basic and acidic residues); it reads HSRETVHALRDAI. A compositionally biased stretch (gly residues) spans 408 to 417; sequence GDSASGGGGQ. The span at 427-449 shows a compositional bias: basic and acidic residues; it reads EGRERAGDDGQGRQPRDGGRAAT.

It localises to the cytoplasm. Functionally, required for the rotation of the flagellar motor. Has a positive effect as flagellar rotation increases when an excess of motd is present. The chain is Chemotaxis protein MotD (motD) from Rhizobium meliloti (Ensifer meliloti).